The sequence spans 306 residues: Ribose-5-phosphate isomerase (306 aa).

Positions 45–68 (GRAQFGVGSTSTSSGDANSVCPAP) are disordered. The segment covering 51 to 61 (VGSTSTSSGDA) has biased composition (polar residues). Residue Ser102 is modified to Phosphoserine.

Belongs to the ribose 5-phosphate isomerase family.

It catalyses the reaction aldehydo-D-ribose 5-phosphate = D-ribulose 5-phosphate. It participates in carbohydrate degradation; pentose phosphate pathway; D-ribose 5-phosphate from D-ribulose 5-phosphate (non-oxidative stage): step 1/1. The sequence is that of Ribose-5-phosphate isomerase from Sus scrofa (Pig).